The primary structure comprises 317 residues: Ataxin-3 homolog (317 aa).

Residues 7–178 enclose the Josephin domain; that stretch reads INSIFFEHQE…RSDADDLISL (172 aa). Cys-20 functions as the Nucleophile in the catalytic mechanism. The active-site Proton acceptor is His-117. The active site involves Asn-132. UIM domains lie at 219 to 239 and 247 to 264; these read SQEEKDLAIAFAMSMETKDGS and EIDEENLRKAIELSQAPG. Residues 254 to 317 are disordered; the sequence is RKAIELSQAP…KKKEERNDEK (64 aa). Residues 276 to 293 show a composition bias toward polar residues; that stretch reads RSRSSTPPGASEPFSNAE. Positions 294–317 are enriched in basic and acidic residues; sequence QQRRDRQKFLERFEKKKEERNDEK. Positions 296–299 are interaction with cdc-48.1 and cdc-48.2; it reads RRDR.

In terms of assembly, forms a complex composed of deubiquitinating enzyme atx-3, adapter ubxn-5 and cdc-48.1. Forms a complex composed of deubiquitinating enzyme atx-3, E4 ubiquitin-protein ligase ufd-2 and cdc-48.1. Interacts (via RRDR motif) with cdc-48.1 (via N-terminus) and cdc-48.2 (via N-terminus); the interaction with cdc-48.1 is not required for atx-3 enzymatic activity. Interacts (via C-terminus) with ubxn-5. May interact with ned-8. As to expression, expressed in germline (at protein level). Expressed in spermatheca, pharynx, dorsal and ventral cords, some head neurons, hypodermis, body wall muscles and coelomocytes.

The protein resides in the cytoplasm. It localises to the nucleus. The protein localises to the nucleolus. The enzyme catalyses Thiol-dependent hydrolysis of ester, thioester, amide, peptide and isopeptide bonds formed by the C-terminal Gly of ubiquitin (a 76-residue protein attached to proteins as an intracellular targeting signal).. Acts as a chain editing deubiquitinating enzyme that binds and cleaves 'Lys-48'-linked polyubiquitin chains, with a preference for chains containing four or more ubiquitin molecules thereby modulating protein degradation by the ubiquitin-proteasome pathway. Probably by regulating the IGF-1-insulin-like pathway, regulates lifespan. Regulates germline DNA double-strand-break repair and apoptosis in response to DNA damage by recruiting E4 ubiquitin-protein ligase ufd-2 to DNA repair foci. Interacts with key regulators of transcription and represses transcription. Acts as a histone-binding protein that regulates transcription. In Caenorhabditis elegans, this protein is Ataxin-3 homolog (atx-3).